Reading from the N-terminus, the 262-residue chain is Acyl-[acyl-carrier-protein]--UDP-N-acetylglucosamine O-acyltransferase (262 aa).

This sequence belongs to the transferase hexapeptide repeat family. LpxA subfamily. In terms of assembly, homotrimer.

Its subcellular location is the cytoplasm. The enzyme catalyses a (3R)-hydroxyacyl-[ACP] + UDP-N-acetyl-alpha-D-glucosamine = a UDP-3-O-[(3R)-3-hydroxyacyl]-N-acetyl-alpha-D-glucosamine + holo-[ACP]. It participates in glycolipid biosynthesis; lipid IV(A) biosynthesis; lipid IV(A) from (3R)-3-hydroxytetradecanoyl-[acyl-carrier-protein] and UDP-N-acetyl-alpha-D-glucosamine: step 1/6. Functionally, involved in the biosynthesis of lipid A, a phosphorylated glycolipid that anchors the lipopolysaccharide to the outer membrane of the cell. This is Acyl-[acyl-carrier-protein]--UDP-N-acetylglucosamine O-acyltransferase from Haemophilus influenzae (strain ATCC 51907 / DSM 11121 / KW20 / Rd).